Reading from the N-terminus, the 269-residue chain is Putative ankyrin repeat protein L23 (269 aa).

ANK repeat units follow at residues 118–147 (EDDY…DIKS), 148–177 (DGDY…DIRA), 179–207 (NDYA…NIRE), 208–237 (QNDY…DIRA), and 238–267 (DNDC…DIRA).

The polypeptide is Putative ankyrin repeat protein L23 (Acanthamoeba polyphaga (Amoeba)).